Reading from the N-terminus, the 411-residue chain is Probable phosphatase HAD1 (411 aa).

The segment covering 14-23 has biased composition (polar residues); that stretch reads LPSPNTSQPP. Residues 14-33 are disordered; it reads LPSPNTSQPPSAAPSRRGSF. Catalysis depends on Asp61, which acts as the Nucleophile. Residues Asp61, Asp63, and Asp338 each coordinate Mg(2+). Residue Asp63 is the Proton donor of the active site. The segment at 296 to 386 is disordered; that stretch reads PRPTPDVTPV…QSGQAGVTLD (91 aa). A compositionally biased stretch (polar residues) spans 326–345; it reads VRNTQTIMKGSDDLTGNDSV. Residues 362 to 373 are compositionally biased toward basic and acidic residues; that stretch reads SVEKRAEMEFHR.

It belongs to the HAD-like hydrolase superfamily. Phosphorylated.

In terms of biological role, probable phosphatase. Required for cell wall integrity and virulence. This is Probable phosphatase HAD1 from Cryptococcus neoformans var. grubii serotype A (strain H99 / ATCC 208821 / CBS 10515 / FGSC 9487) (Filobasidiella neoformans var. grubii).